Reading from the N-terminus, the 396-residue chain is Putative T-box protein 39 (396 aa).

The segment at residues 11–192 is a DNA-binding region (T-box); the sequence is MAEEDRWKQW…KNSTYGNRLD (182 aa). The disordered stretch occupies residues 185-215; that stretch reads STYGNRLDGGNKRKNTDSSEERTSKRSKNET. Residues 193-215 are compositionally biased toward basic and acidic residues; the sequence is GGNKRKNTDSSEERTSKRSKNET.

The protein localises to the nucleus. The chain is Putative T-box protein 39 (tbx-39) from Caenorhabditis elegans.